The sequence spans 1058 residues: Ubiquitin-like modifier-activating enzyme 1 Y (1058 aa).

Residues 1–22 are disordered; that stretch reads MSSSVLSKKRKVSGPDSSLDSS. Residues A477, D503, R514, K527, and 575-576 each bind ATP; that span reads DN. The active-site Glycyl thioester intermediate is the C631.

It belongs to the ubiquitin-activating E1 family. As to quaternary structure, monomer. Expressed in testis in A spermatogonia and spermatids but not (or at very low levels) in pachytene spermatocytes. Also expressed in Y-bearing ovaries and at very low levels in adrenal gland.

It catalyses the reaction ATP + ubiquitin + [E1 ubiquitin-activating enzyme]-L-cysteine = AMP + diphosphate + S-ubiquitinyl-[E1 ubiquitin-activating enzyme]-L-cysteine.. It functions in the pathway protein modification; protein ubiquitination. Activates ubiquitin by first adenylating its C-terminal glycine residue with ATP, and thereafter linking this residue to the side chain of a cysteine residue in E1, yielding a ubiquitin-E1 thioester and free AMP. The Y chromosome form could be involved in the survival and proliferation of differentiating spermatogonia. This Mus musculus (Mouse) protein is Ubiquitin-like modifier-activating enzyme 1 Y (Uba1y).